Reading from the N-terminus, the 37-residue chain is Glucagon-1 (37 aa).

The protein belongs to the glucagon family.

The protein resides in the secreted. In terms of biological role, glucagon plays a key role in glucose metabolism and homeostasis. Regulates blood glucose by increasing gluconeogenesis and decreasing glycolysis. In Huso dauricus (Kaluga sturgeon), this protein is Glucagon-1.